A 472-amino-acid polypeptide reads, in one-letter code: Eukaryotic translation initiation factor 2 subunit 3B (472 aa).

Ala-2 is subject to N-acetylalanine. Position 16 is a phosphoserine (Ser-16). The 210-residue stretch at Gln-39–Arg-248 folds into the tr-type G domain. Residues Gly-48–Ser-55 form a G1 region. Position 51–56 (Ala-51–Thr-56) interacts with GTP. Residues Asn-76 to Lys-80 are G2. The segment at Asp-134–Gly-137 is G3. GTP contacts are provided by residues Asn-190–Asp-193 and Ser-225–Gln-227. Positions Asn-190–Asp-193 are G4. Positions Ser-225–Gln-227 are G5.

Belongs to the TRAFAC class translation factor GTPase superfamily. Classic translation factor GTPase family. EIF2G subfamily. EIF2 is a heterotrimer composed of an alpha, a beta and a gamma chain. eIF2 is member of the 43S pre-initiation complex (43S PIC). In terms of tissue distribution, specifically expressed in testis at the mRNA level.

The enzyme catalyses GTP + H2O = GDP + phosphate + H(+). In terms of biological role, member of the eIF2 complex that functions in the early steps of protein synthesis by forming a ternary complex with GTP and initiator tRNA. This complex binds to a 40S ribosomal subunit, followed by mRNA binding to form the 43S pre-initiation complex (43S PIC). Junction of the 60S ribosomal subunit to form the 80S initiation complex is preceded by hydrolysis of the GTP bound to eIF2 and release of an eIF2-GDP binary complex. In order for eIF2 to recycle and catalyze another round of initiation, the GDP bound to eIF2 must exchange with GTP by way of a reaction catalyzed by eIF-2B. In Homo sapiens (Human), this protein is Eukaryotic translation initiation factor 2 subunit 3B.